The following is a 186-amino-acid chain: UPF0301 protein HI_0304 (186 aa).

This sequence belongs to the UPF0301 (AlgH) family.

This Haemophilus influenzae (strain ATCC 51907 / DSM 11121 / KW20 / Rd) protein is UPF0301 protein HI_0304.